Reading from the N-terminus, the 231-residue chain is Large ribosomal subunit protein uL1 (231 aa).

It belongs to the universal ribosomal protein uL1 family. Part of the 50S ribosomal subunit.

In terms of biological role, binds directly to 23S rRNA. The L1 stalk is quite mobile in the ribosome, and is involved in E site tRNA release. Protein L1 is also a translational repressor protein, it controls the translation of the L11 operon by binding to its mRNA. This chain is Large ribosomal subunit protein uL1, found in Chlorobaculum tepidum (strain ATCC 49652 / DSM 12025 / NBRC 103806 / TLS) (Chlorobium tepidum).